Consider the following 164-residue polypeptide: MD-2-related lipid-recognition protein 3 (164 aa).

The first 24 residues, 1 to 24, serve as a signal peptide directing secretion; it reads MAMSHVQPMLLLLVSLFFLPALRG.

Interacts with RUB1/NEDD8. Post-translationally, neddylated. In terms of processing, ubiquitinated.

It is found in the vacuole. It localises to the endoplasmic reticulum. Its function is as follows. May be involved in herbivory-mediated responses. May play a role in herbivory-associated molecular pattern (HAMP) recognition. May function is jasmonate (JA) signaling in response to HAMP. May play a role in defense response against the pathogens Altenaria brassicicola and Pseudomonas syringae. This chain is MD-2-related lipid-recognition protein 3, found in Arabidopsis thaliana (Mouse-ear cress).